Here is a 130-residue protein sequence, read N- to C-terminus: Small ribosomal subunit protein uS11c (130 aa).

It belongs to the universal ribosomal protein uS11 family. Part of the 30S ribosomal subunit.

It localises to the plastid. It is found in the chloroplast. The protein is Small ribosomal subunit protein uS11c of Guillardia theta (Cryptophyte).